We begin with the raw amino-acid sequence, 264 residues long: 3-methyl-2-oxobutanoate hydroxymethyltransferase (264 aa).

Residues Asp-45 and Asp-84 each contribute to the Mg(2+) site. 3-methyl-2-oxobutanoate contacts are provided by residues 45 to 46, Asp-84, and Lys-112; that span reads DS. Mg(2+) is bound at residue Glu-114. The Proton acceptor role is filled by Glu-181.

This sequence belongs to the PanB family. Homodecamer; pentamer of dimers. Mg(2+) serves as cofactor.

The protein resides in the cytoplasm. The enzyme catalyses 3-methyl-2-oxobutanoate + (6R)-5,10-methylene-5,6,7,8-tetrahydrofolate + H2O = 2-dehydropantoate + (6S)-5,6,7,8-tetrahydrofolate. It functions in the pathway cofactor biosynthesis; (R)-pantothenate biosynthesis; (R)-pantoate from 3-methyl-2-oxobutanoate: step 1/2. In terms of biological role, catalyzes the reversible reaction in which hydroxymethyl group from 5,10-methylenetetrahydrofolate is transferred onto alpha-ketoisovalerate to form ketopantoate. This Escherichia coli O1:K1 / APEC protein is 3-methyl-2-oxobutanoate hydroxymethyltransferase.